The primary structure comprises 651 residues: E3 SUMO-protein ligase PIAS1 (651 aa).

Ala2 is modified (N-acetylalanine). Residues 2 to 200 are required for interaction with MSX1; that stretch reads ADSAELKQMV…KCDFTVQVQL (199 aa). Residues 11–45 form the SAP domain; that stretch reads VMSLRVSELQVLLGYAGRNKHGRKHELLTKALHLL. Residues 19–23 carry the LXXLL motif motif; that stretch reads LQVLL. Residues Lys40 and Lys46 each participate in a glycyl lysine isopeptide (Lys-Gly) (interchain with G-Cter in SUMO2) cross-link. The short motif at 56-64 is the Nuclear localization signal element; sequence KIKELYRRR. A PINIT domain is found at 124-288; it reads HLTSALHPVH…SMAVYLVKQL (165 aa). Glycyl lysine isopeptide (Lys-Gly) (interchain with G-Cter in SUMO2) cross-links involve residues Lys137 and Lys238. The segment at 320-405 adopts an SP-RING-type zinc-finger fold; the sequence is PDSEIATTSL…LKYCTDCDEI (86 aa). Cys351, His353, Cys374, and Cys377 together coordinate Zn(2+). The Nuclear localization signal motif lies at 368-380; the sequence is KKPTWVCPVCDKK. Lys453 is covalently cross-linked (Glycyl lysine isopeptide (Lys-Gly) (interchain with G-Cter in SUMO2)). The tract at residues 462–473 is SUMO1-binding; sequence LTIDSSSDEEEE. A disordered region spans residues 465 to 511; it reads DSSSDEEEEEPPAKRTCPSLSPTSPLSNKGILSLPHQASPVSRTPSL. Ser467, Ser468, Ser483, and Ser485 each carry phosphoserine. Residues 482–491 show a composition bias toward low complexity; the sequence is PSLSPTSPLS. Thr487 bears the Phosphothreonine mark. Residues Ser488 and Ser491 each carry the phosphoserine modification. Lys493 is covalently cross-linked (Glycyl lysine isopeptide (Lys-Gly) (interchain with G-Cter in SUMO2)). Phosphoserine is present on residues Ser503, Ser510, and Ser522. A run of 2 repeats spans residues 520 to 523 and 557 to 560. The 4 X 4 AA repeats of N-T-S-L stretch occupies residues 520–615; that stretch reads NTSLIQDYRH…GSSSGSNSSL (96 aa). A 3; approximate repeat occupies 598–601; sequence STSL. The tract at residues 600-630 is disordered; sequence SLPATNGSSSGSNSSLVSSNSLRESHGHGVA. The span at 605 to 621 shows a compositional bias: low complexity; the sequence is NGSSSGSNSSLVSSNSL. A 4; approximate repeat occupies 612–615; the sequence is NSSL.

It belongs to the PIAS family. In terms of assembly, interacts with NR2C1; the interaction promotes its sumoylation. Interacts with DDX21, CSRP2, AXIN1, JUN, SATB2, PLAG1, TP53 and STAT1 (dimer), following IFNA1-stimulation. Interacts with SP3 (preferentially when SUMO-modified). Interacts with KLF8; the interaction results in SUMO ligation and repression of KLF8 transcriptional activity and of its cell cycle progression into G(1) phase. Interacts with CHUK/IKKA; this interaction induces PIAS1 phosphorylation. Interacts with PTK2/FAK1; the interaction promotes its sumoylation. Interacts with SUMO1, UBE2I, NCOA2 and AR. Interacts with NR2C1; the interaction promotes its sumoylation. Interacts with DDX5. Interacts with MTA1. Interacts with PML (isoform PML-12). Interacts with PRDM1. Interacts (via N-terminus) with MSX1 (via C-terminus); the interaction is required for the localization of both proteins to the nuclear periphery and specific binding of MSX1 to the core enhancer region in target gene promoters. Sumoylated. In terms of tissue distribution, expressed in kidney, heart, spleen, brain and cerebellum; weak expression, if any, in liver and lung.

The protein resides in the nucleus. It is found in the nucleus speckle. Its subcellular location is the PML body. It localises to the cytoplasm. The protein localises to the cytoskeleton. The enzyme catalyses S-ubiquitinyl-[E2 ubiquitin-conjugating enzyme]-L-cysteine + [acceptor protein]-L-lysine = [E2 ubiquitin-conjugating enzyme]-L-cysteine + N(6)-ubiquitinyl-[acceptor protein]-L-lysine.. The protein operates within protein modification; protein sumoylation. Functions as an E3-type small ubiquitin-like modifier (SUMO) ligase, stabilizing the interaction between UBE2I and the substrate, and as a SUMO-tethering factor. Catalyzes sumoylation of various proteins, such as CEBPB, MRE11, MTA1, PTK2 and PML. Plays a crucial role as a transcriptional coregulation in various cellular pathways, including the STAT pathway, the p53 pathway and the steroid hormone signaling pathway. In vitro, binds A/T-rich DNA. The effects of this transcriptional coregulation, transactivation or silencing, may vary depending upon the biological context. Mediates sumoylation of MRE11, stabilizing MRE11 on chromatin during end resection. Sumoylates PML (at 'Lys-65' and 'Lys-160') and PML-RAR and promotes their ubiquitin-mediated degradation. PIAS1-mediated sumoylation of PML promotes its interaction with CSNK2A1/CK2 which in turn promotes PML phosphorylation and degradation. Enhances the sumoylation of MTA1 and may participate in its paralog-selective sumoylation. Plays a dynamic role in adipogenesis by promoting the SUMOylation and degradation of CEBPB. Mediates the nuclear mobility and localization of MSX1 to the nuclear periphery, whereby MSX1 is brought into the proximity of target myoblast differentiation factor genes. Also required for the binding of MSX1 to the core enhancer region in target gene promoter regions, independent of its sumoylation activity. Capable of binding to the core enhancer region TAAT box in the MYOD1 gene promoter. The polypeptide is E3 SUMO-protein ligase PIAS1 (Pias1) (Mus musculus (Mouse)).